A 537-amino-acid polypeptide reads, in one-letter code: MFFIINDLKECISALKLKFDDQKELVKLVKNNSFNGFSSTIIFQLKSENHKKIADSIVEWFLKNKKDNYQNVFIANNNFINFQISYQKYLEYLIKTPCFTKKNIKILIESVSANPTGRIHLGHVRIAFFGDVLNNLAKLLGYTTVCEYWVNDYGQQARVFSFSVYQSLQLKKNIAIQQHPDGYSGIVIDKIASEIENFPVDNLNFEEFCKTSFLDHFLVNCTQKVLSLIKSDLNKIHVFIDSWKFESEIVKKTNFNDLLEQLKPNSYFYQDNALWLKTTLYGDDKDRVLIRSDKRASYFGTDVAYHLEKLQRGFDILFNVWGTDHEGHIKRMYCAFDALKNTTKTSLKIFALQLVTLYKNKELVRLSKRAGNVITIETMLSMISEDAARWFMLSQNNGTIIKIDLDIANLQNSANPVYYVQYAFARMNSILRIANSDQLKEITDCSLLINEKEISLLNQLVYYPFMLQKAMETGELHLLTNFLYETASLFHSWYKVCKINDDKNSLLSAQRLALLRSLQFIVKQILDVLKISTPQQM.

The short motif at 113–123 is the 'HIGH' region element; the sequence is ANPTGRIHLGH.

Belongs to the class-I aminoacyl-tRNA synthetase family. As to quaternary structure, monomer.

Its subcellular location is the cytoplasm. The enzyme catalyses tRNA(Arg) + L-arginine + ATP = L-arginyl-tRNA(Arg) + AMP + diphosphate. The polypeptide is Arginine--tRNA ligase (argS) (Mycoplasma genitalium (strain ATCC 33530 / DSM 19775 / NCTC 10195 / G37) (Mycoplasmoides genitalium)).